A 100-amino-acid chain; its full sequence is Urease subunit gamma (100 aa).

This sequence belongs to the urease gamma subunit family. As to quaternary structure, heterotrimer of UreA (gamma), UreB (beta) and UreC (alpha) subunits. Three heterotrimers associate to form the active enzyme.

It localises to the cytoplasm. The enzyme catalyses urea + 2 H2O + H(+) = hydrogencarbonate + 2 NH4(+). Its pathway is nitrogen metabolism; urea degradation; CO(2) and NH(3) from urea (urease route): step 1/1. The sequence is that of Urease subunit gamma from Rhizobium etli (strain CIAT 652).